A 141-amino-acid chain; its full sequence is Small ribosomal subunit protein uS12 (141 aa).

Residues 1 to 11 show a composition bias toward polar residues; sequence MPTISQLVTTS. A disordered region spans residues 1 to 22; it reads MPTISQLVTTSRQDKNYKSKSP. Aspartate 102 carries the 3-methylthioaspartic acid modification.

It belongs to the universal ribosomal protein uS12 family. Part of the 30S ribosomal subunit. Contacts proteins S8 and S17. May interact with IF1 in the 30S initiation complex.

With S4 and S5 plays an important role in translational accuracy. In terms of biological role, interacts with and stabilizes bases of the 16S rRNA that are involved in tRNA selection in the A site and with the mRNA backbone. Located at the interface of the 30S and 50S subunits, it traverses the body of the 30S subunit contacting proteins on the other side and probably holding the rRNA structure together. The combined cluster of proteins S8, S12 and S17 appears to hold together the shoulder and platform of the 30S subunit. This Acholeplasma laidlawii (strain PG-8A) protein is Small ribosomal subunit protein uS12.